A 347-amino-acid polypeptide reads, in one-letter code: Phenylalanine--tRNA ligase alpha subunit (347 aa).

Glu-261 contacts Mg(2+).

The protein belongs to the class-II aminoacyl-tRNA synthetase family. Phe-tRNA synthetase alpha subunit type 1 subfamily. As to quaternary structure, tetramer of two alpha and two beta subunits. Requires Mg(2+) as cofactor.

It is found in the cytoplasm. It carries out the reaction tRNA(Phe) + L-phenylalanine + ATP = L-phenylalanyl-tRNA(Phe) + AMP + diphosphate + H(+). In Streptococcus thermophilus (strain ATCC BAA-491 / LMD-9), this protein is Phenylalanine--tRNA ligase alpha subunit.